A 348-amino-acid polypeptide reads, in one-letter code: NADH-ubiquinone oxidoreductase chain 2 (348 aa).

9 consecutive transmembrane segments (helical) span residues 3–23, 60–80, 96–116, 149–169, 178–197, 202–219, 246–266, 274–294, and 326–346; these read PYVL…TFAS, FLTQ…NAWM, TMFM…FWMP, IDPL…GWGG, ILAY…IQYA, LLAL…FLTL, LVLL…KWLI, DLPI…YFYL, and LALF…ILTL.

This sequence belongs to the complex I subunit 2 family.

The protein resides in the mitochondrion inner membrane. It carries out the reaction a ubiquinone + NADH + 5 H(+)(in) = a ubiquinol + NAD(+) + 4 H(+)(out). Functionally, core subunit of the mitochondrial membrane respiratory chain NADH dehydrogenase (Complex I) that is believed to belong to the minimal assembly required for catalysis. Complex I functions in the transfer of electrons from NADH to the respiratory chain. The immediate electron acceptor for the enzyme is believed to be ubiquinone. This is NADH-ubiquinone oxidoreductase chain 2 (MT-ND2) from Carassius auratus (Goldfish).